Consider the following 1207-residue polypeptide: Putative coatomer subunit alpha (1207 aa).

8 WD repeats span residues S9 to D50, G51 to S90, G93 to T134, G135 to A174, G210 to V249, G254 to T293, R296 to N336, and S370 to P411. Phosphoserine occurs at positions 409 and 942.

As to quaternary structure, oligomeric complex that consists of at least the alpha, beta, beta', gamma, delta, epsilon and zeta subunits.

The protein resides in the cytoplasm. The protein localises to the golgi apparatus membrane. Functionally, the coatomer is a cytosolic protein complex that binds to dilysine motifs and reversibly associates with Golgi non-clathrin-coated vesicles, which further mediate biosynthetic protein transport from the ER, via the Golgi up to the trans Golgi network. Coatomer complex is required for budding from Golgi membranes, and is essential for the retrograde Golgi-to-ER transport of dilysine-tagged proteins. This chain is Putative coatomer subunit alpha, found in Schizosaccharomyces pombe (strain 972 / ATCC 24843) (Fission yeast).